A 507-amino-acid chain; its full sequence is Histidine ammonia-lyase (507 aa).

Positions 141–143 (ASG) form a cross-link, 5-imidazolinone (Ala-Gly). At S142 the chain carries 2,3-didehydroalanine (Ser).

Belongs to the PAL/histidase family. Post-translationally, contains an active site 4-methylidene-imidazol-5-one (MIO), which is formed autocatalytically by cyclization and dehydration of residues Ala-Ser-Gly.

The protein resides in the cytoplasm. The catalysed reaction is L-histidine = trans-urocanate + NH4(+). The protein operates within amino-acid degradation; L-histidine degradation into L-glutamate; N-formimidoyl-L-glutamate from L-histidine: step 1/3. The chain is Histidine ammonia-lyase from Burkholderia pseudomallei (strain 1106a).